The primary structure comprises 185 residues: p53 apoptosis effector related to PMP-22 (185 aa).

The next 4 membrane-spanning stretches (helical) occupy residues 13 to 33 (WILPMLLLFAIIFDIIAIAAQ), 74 to 94 (VAALMIIGLIILIFAFIISLV), 105 to 125 (LPFIGLLLILAVIVQIIALII), and 143 to 163 (WAYGFGWGATILTLGCAILFC).

This sequence belongs to the TMEM47 family.

Its subcellular location is the cell junction. It localises to the desmosome. The protein localises to the cell membrane. It is found in the cytoplasm. Functionally, component of intercellular desmosome junctions. Positively regulates apoptosis in the early-stage embryo in response to UV irradiation, this is partially dependent on tp53 activation. Required for the survival of cell populations in the developing notochord and skin, therefore required for normal embryogenesis beyond 30 hpf. Acts as a positive regulator of endothelial cell apoptosis in response to blood flow-derived shear stress. In Danio rerio (Zebrafish), this protein is p53 apoptosis effector related to PMP-22.